Reading from the N-terminus, the 95-residue chain is Aspartyl/glutamyl-tRNA(Asn/Gln) amidotransferase subunit C (95 aa).

Belongs to the GatC family. As to quaternary structure, heterotrimer of A, B and C subunits.

The catalysed reaction is L-glutamyl-tRNA(Gln) + L-glutamine + ATP + H2O = L-glutaminyl-tRNA(Gln) + L-glutamate + ADP + phosphate + H(+). It carries out the reaction L-aspartyl-tRNA(Asn) + L-glutamine + ATP + H2O = L-asparaginyl-tRNA(Asn) + L-glutamate + ADP + phosphate + 2 H(+). Functionally, allows the formation of correctly charged Asn-tRNA(Asn) or Gln-tRNA(Gln) through the transamidation of misacylated Asp-tRNA(Asn) or Glu-tRNA(Gln) in organisms which lack either or both of asparaginyl-tRNA or glutaminyl-tRNA synthetases. The reaction takes place in the presence of glutamine and ATP through an activated phospho-Asp-tRNA(Asn) or phospho-Glu-tRNA(Gln). This chain is Aspartyl/glutamyl-tRNA(Asn/Gln) amidotransferase subunit C, found in Alkalilimnicola ehrlichii (strain ATCC BAA-1101 / DSM 17681 / MLHE-1).